The following is a 149-amino-acid chain: Protein RhiC (149 aa).

The signal sequence occupies residues 1–23 (MTATLRAFGWLAAFALTVTFAQG).

Its subcellular location is the periplasm. In terms of biological role, may be involved in plant-microbe interaction. The chain is Protein RhiC (rhiC) from Rhizobium leguminosarum bv. viciae.